Here is a 233-residue protein sequence, read N- to C-terminus: Translation initiation factor 6 (233 aa).

The protein belongs to the eIF-6 family.

Binds to the 50S ribosomal subunit and prevents its association with the 30S ribosomal subunit to form the 70S initiation complex. This chain is Translation initiation factor 6, found in Aeropyrum pernix (strain ATCC 700893 / DSM 11879 / JCM 9820 / NBRC 100138 / K1).